Consider the following 2343-residue polypeptide: Pecanex-like protein 1 (2343 aa).

2 consecutive transmembrane segments (helical) span residues 33 to 53 and 57 to 77; these read ALHLYLWLFLLGLPFTLYMAL and MIIVAVYCPVVAAVFIVLKMV. 4 disordered regions span residues 98–163, 271–290, 306–691, and 749–826; these read FTDQ…GSSR, SHSYRKEHRPRGVPRTSSSA, QQQR…TRAR, and TRSR…QGQQ. Positions 143 to 163 are enriched in polar residues; sequence SSRNSYAGLDPSNQIGSGSSR. The segment covering 272-282 has biased composition (basic residues); it reads HSYRKEHRPRG. Positions 372-390 are enriched in low complexity; the sequence is SLRSLSTRSSGSTESYCSG. Residues 396–412 are compositionally biased toward polar residues; sequence NSTLSSYKSEQTSSTHI. Basic and acidic residues-rich tracts occupy residues 416-457, 507-521, and 530-546; these read LSEH…DKTA, RPPEQSAESKEEQGE, and KVCKDDGGKQKEGDVRP. Basic residues predominate over residues 556–571; it reads TSAHKPGRRRTGKKRA. 3 stretches are compositionally biased toward low complexity: residues 624 to 637, 769 to 780, and 809 to 826; these read SDSSSSATSHSCQS, AATGAAQASEEA, and TLLIGPPLSLQDGQQGQQ. Helical transmembrane passes span 978-998, 1009-1029, 1034-1054, 1068-1088, 1118-1138, 1162-1182, 1195-1215, 1268-1288, 1296-1316, 1406-1426, 1434-1454, 1458-1478, and 1493-1513; these read FWILPQLWIGINFDRLTLLAL, ILAVVLAILVAFLGSILLIQG, IWVFQFCLVIASCQYSLLKSV, IIAYSRPVYFCLCCGLIWLLD, LVIVFTLCFPIVFFIGLLPQV, LLAALYSFLCSVVAVALLYGL, HIPVLFSVFCGLLVAVSYHLS, LVVCVVIGVLYFAIHVSTVFT, YVLYALVGFVGLVTHYVLPQV, SFSSPTYQYITVIFTVLFFKF, TMLLDLFFMSILFSKLWELLY, FVYTYVAPWQITWGSAFHAFA, and AVVSALFSTPLNPFLGSAIFI. A disordered region spans residues 2050–2120; it reads EDSDTGGGTS…VQSSLVRQSP (71 aa). Polar residues-rich tracts occupy residues 2060 to 2080 and 2094 to 2117; these read CPANSATTASDPHNSVPQGST and PTTSYPPTLGTSHSAHSVQSSLVR.

It belongs to the pecanex family. In terms of tissue distribution, specifically expressed in the germ line and not in the somatic cells of the testis, reaching its peak at the pachytene stage of the meiotic prophase. Detected in pachytene spermatocytes and round spermatids (at protein level).

Its subcellular location is the membrane. This chain is Pecanex-like protein 1, found in Rattus norvegicus (Rat).